A 172-amino-acid chain; its full sequence is 3-hydroxydecanoyl-[acyl-carrier-protein] dehydratase (172 aa).

His71 is a catalytic residue.

It belongs to the thioester dehydratase family. FabA subfamily. As to quaternary structure, homodimer.

The protein resides in the cytoplasm. The catalysed reaction is a (3R)-hydroxyacyl-[ACP] = a (2E)-enoyl-[ACP] + H2O. It catalyses the reaction (3R)-hydroxydecanoyl-[ACP] = (2E)-decenoyl-[ACP] + H2O. It carries out the reaction (2E)-decenoyl-[ACP] = (3Z)-decenoyl-[ACP]. Its pathway is lipid metabolism; fatty acid biosynthesis. In terms of biological role, necessary for the introduction of cis unsaturation into fatty acids. Catalyzes the dehydration of (3R)-3-hydroxydecanoyl-ACP to E-(2)-decenoyl-ACP and then its isomerization to Z-(3)-decenoyl-ACP. Can catalyze the dehydratase reaction for beta-hydroxyacyl-ACPs with saturated chain lengths up to 16:0, being most active on intermediate chain length. This chain is 3-hydroxydecanoyl-[acyl-carrier-protein] dehydratase, found in Pseudoalteromonas atlantica (strain T6c / ATCC BAA-1087).